The sequence spans 448 residues: MKKLYIKTFGCQMNEYDSGKMADLLHADEGMVMTDTPEDADVVLLNTCSIREKAEDKVFSDLGRLRELKKTKPHMLIGVGGCVASQEGRQIVSRAPYVDVVFGPQTLHRLSDLIAQRRKTGLSQVDISFPEIEKFDHLPASRQTRGSAYVSIMEGCSKYCSYCVVPYTRGEEVSRPFDDVLTEVAGLASKGVKEIVLLGQNVNAYLGKMGDAEEIADFALLIEYIAEIPGVERIRFTTSHPKEFTQRLIDVYAKVPKLVSHLHLPVQHGSDSILSAMKRGYTALEYKSIIRKMRAVRPDLTLSSDFIVGFPGETDADFEKLLKMVQELDFDNSFCFIFSPRPGTPAANLSDDTPYEVKLKRLQTLLALIEGQSNQISQKMLGKTERVLIEGLAKDGVNLQGRAENNRVIHFSPPDQNIDGLIGEMVDIRITEVLNYTLRGELVETHVI.

The MTTase N-terminal domain occupies 2–119 (KKLYIKTFGC…LSDLIAQRRK (118 aa)). [4Fe-4S] cluster-binding residues include cysteine 11, cysteine 48, cysteine 82, cysteine 156, cysteine 160, and cysteine 163. The Radical SAM core domain occupies 142 to 375 (RQTRGSAYVS…LALIEGQSNQ (234 aa)). A TRAM domain is found at 378 to 444 (QKMLGKTERV…NYTLRGELVE (67 aa)).

The protein belongs to the methylthiotransferase family. MiaB subfamily. In terms of assembly, monomer. Requires [4Fe-4S] cluster as cofactor.

The protein resides in the cytoplasm. It carries out the reaction N(6)-dimethylallyladenosine(37) in tRNA + (sulfur carrier)-SH + AH2 + 2 S-adenosyl-L-methionine = 2-methylsulfanyl-N(6)-dimethylallyladenosine(37) in tRNA + (sulfur carrier)-H + 5'-deoxyadenosine + L-methionine + A + S-adenosyl-L-homocysteine + 2 H(+). Its function is as follows. Catalyzes the methylthiolation of N6-(dimethylallyl)adenosine (i(6)A), leading to the formation of 2-methylthio-N6-(dimethylallyl)adenosine (ms(2)i(6)A) at position 37 in tRNAs that read codons beginning with uridine. This chain is tRNA-2-methylthio-N(6)-dimethylallyladenosine synthase, found in Polynucleobacter asymbioticus (strain DSM 18221 / CIP 109841 / QLW-P1DMWA-1) (Polynucleobacter necessarius subsp. asymbioticus).